The sequence spans 169 residues: Myosin regulatory light chain 11 (169 aa).

N,N,N-trimethylalanine is present on A2. 2 positions are modified to phosphoserine: S15 and S16. T25 and T35 each carry phosphothreonine. In terms of domain architecture, EF-hand 1 spans 25–60 (TQIQEFKEAFTVIDQNRDGIIDKEDLRDTFAAMGRL). Residues D38, N40, D42, and D49 each contribute to the Ca(2+) site. Position 75 is a phosphoserine (S75). EF-hand domains follow at residues 95-130 (DPED…QCDR) and 131-166 (FSQE…GDAK). The residue at position 101 (T101) is a Phosphothreonine.

Myosin is a hexamer of 2 heavy chains and 4 light chains.

Functionally, myosin regulatory subunit that plays an essential to maintain muscle integrity during early development. Plays a role in muscle contraction. The protein is Myosin regulatory light chain 11 (Myl11) of Rattus norvegicus (Rat).